Consider the following 134-residue polypeptide: UPF0412 protein YaaI (134 aa).

The N-terminal stretch at 1–23 (MRSVLTISVGLLFGLALSSVAHA) is a signal peptide.

It belongs to the UPF0412 family.

This Salmonella typhimurium (strain LT2 / SGSC1412 / ATCC 700720) protein is UPF0412 protein YaaI.